A 268-amino-acid chain; its full sequence is Membrane lipoprotein TpN32 (268 aa).

The signal sequence occupies residues Met-1–Ala-23. Residue Cys-24 is the site of N-palmitoyl cysteine attachment. Residue Cys-24 is the site of S-diacylglycerol cysteine attachment.

This sequence belongs to the NlpA lipoprotein family.

It localises to the cell membrane. In Treponema pallidum (strain Nichols), this protein is Membrane lipoprotein TpN32 (tpn32).